Reading from the N-terminus, the 519-residue chain is Probable carboxypeptidase S-like 2 (519 aa).

A helical transmembrane segment spans residues 25–45; sequence FNLIKIIIRNLLIGILLMLVL. Residue His151 coordinates Zn(2+). Asp153 is a catalytic residue. Asp184 lines the Zn(2+) pocket. Glu218 (proton acceptor) is an active-site residue. Residues Glu219, Asp246, and His490 each coordinate Zn(2+).

It belongs to the peptidase M20A family. Zn(2+) is required as a cofactor.

Its subcellular location is the membrane. This chain is Probable carboxypeptidase S-like 2, found in Dictyostelium discoideum (Social amoeba).